Reading from the N-terminus, the 657-residue chain is Probable potassium transport system protein Kup (657 aa).

Transmembrane regions (helical) follow at residues 14 to 34, 47 to 67, 96 to 116, 140 to 160, 166 to 186, 201 to 221, 242 to 262, 283 to 303, 340 to 360, 371 to 391, 396 to 416, and 425 to 445; these read IGGL…SPLY, ADIV…QTTI, IQWL…DGII, TIVY…QFGT, FFAP…FIQI, AYHL…VFLC, ISWI…AAYL, LIMP…AAVI, LYIP…VLHF, GLAI…YLIM, LYFM…FLIA, and GYVT…WYLA.

Belongs to the HAK/KUP transporter (TC 2.A.72) family.

It localises to the cell inner membrane. The enzyme catalyses K(+)(in) + H(+)(in) = K(+)(out) + H(+)(out). In terms of biological role, transport of potassium into the cell. Likely operates as a K(+):H(+) symporter. The chain is Probable potassium transport system protein Kup from Flavobacterium johnsoniae (strain ATCC 17061 / DSM 2064 / JCM 8514 / BCRC 14874 / CCUG 350202 / NBRC 14942 / NCIMB 11054 / UW101) (Cytophaga johnsonae).